The primary structure comprises 390 residues: 1-deoxy-D-xylulose 5-phosphate reductoisomerase (390 aa).

NADPH contacts are provided by threonine 10, glycine 11, serine 12, valine 13, and asparagine 124. Lysine 125 provides a ligand contact to 1-deoxy-D-xylulose 5-phosphate. Glutamate 126 lines the NADPH pocket. Aspartate 150 serves as a coordination point for Mn(2+). The 1-deoxy-D-xylulose 5-phosphate site is built by serine 151, glutamate 152, serine 181, and histidine 204. Residue glutamate 152 coordinates Mn(2+). Residue glycine 210 coordinates NADPH. 4 residues coordinate 1-deoxy-D-xylulose 5-phosphate: serine 217, asparagine 222, lysine 223, and glutamate 226. A Mn(2+)-binding site is contributed by glutamate 226.

It belongs to the DXR family. It depends on Mg(2+) as a cofactor. The cofactor is Mn(2+).

It carries out the reaction 2-C-methyl-D-erythritol 4-phosphate + NADP(+) = 1-deoxy-D-xylulose 5-phosphate + NADPH + H(+). Its pathway is isoprenoid biosynthesis; isopentenyl diphosphate biosynthesis via DXP pathway; isopentenyl diphosphate from 1-deoxy-D-xylulose 5-phosphate: step 1/6. In terms of biological role, catalyzes the NADPH-dependent rearrangement and reduction of 1-deoxy-D-xylulose-5-phosphate (DXP) to 2-C-methyl-D-erythritol 4-phosphate (MEP). This Janthinobacterium sp. (strain Marseille) (Minibacterium massiliensis) protein is 1-deoxy-D-xylulose 5-phosphate reductoisomerase.